Consider the following 491-residue polypeptide: Probable protein phosphatase 2C 6 (491 aa).

Positions 1 to 16 (MGLCHSKIDKTTRKET) are enriched in basic and acidic residues. A disordered region spans residues 1 to 39 (MGLCHSKIDKTTRKETGATSTATTTVERQSSGRLRRPRD). Positions 17-28 (GATSTATTTVER) are enriched in low complexity. The region spanning 64–376 (IACLYTQQGK…DDCAVVCLFL (313 aa)) is the PPM-type phosphatase domain. The Mn(2+) site is built by Asp-100, Gly-101, Asp-321, and Asp-367. Positions 391–422 (VNHSHEESTESVTITSSKDADKKEEASTETNE) are disordered.

This sequence belongs to the PP2C family. Mg(2+) is required as a cofactor. Requires Mn(2+) as cofactor.

It catalyses the reaction O-phospho-L-seryl-[protein] + H2O = L-seryl-[protein] + phosphate. It carries out the reaction O-phospho-L-threonyl-[protein] + H2O = L-threonyl-[protein] + phosphate. This is Probable protein phosphatase 2C 6 from Arabidopsis thaliana (Mouse-ear cress).